The chain runs to 134 residues: Ribosome-binding factor A (134 aa).

It belongs to the RbfA family. As to quaternary structure, monomer. Binds 30S ribosomal subunits, but not 50S ribosomal subunits or 70S ribosomes.

The protein localises to the cytoplasm. Its function is as follows. One of several proteins that assist in the late maturation steps of the functional core of the 30S ribosomal subunit. Associates with free 30S ribosomal subunits (but not with 30S subunits that are part of 70S ribosomes or polysomes). Required for efficient processing of 16S rRNA. May interact with the 5'-terminal helix region of 16S rRNA. The chain is Ribosome-binding factor A from Rhizobium etli (strain CIAT 652).